Here is a 274-residue protein sequence, read N- to C-terminus: 3-methyl-2-oxobutanoate hydroxymethyltransferase (274 aa).

The Mg(2+) site is built by aspartate 44 and aspartate 83. 3-methyl-2-oxobutanoate-binding positions include aspartate 44 to serine 45, aspartate 83, and lysine 113. Position 115 (glutamate 115) interacts with Mg(2+). Glutamate 182 (proton acceptor) is an active-site residue.

Belongs to the PanB family. As to quaternary structure, homodecamer; pentamer of dimers. Mg(2+) is required as a cofactor.

Its subcellular location is the cytoplasm. It carries out the reaction 3-methyl-2-oxobutanoate + (6R)-5,10-methylene-5,6,7,8-tetrahydrofolate + H2O = 2-dehydropantoate + (6S)-5,6,7,8-tetrahydrofolate. It functions in the pathway cofactor biosynthesis; (R)-pantothenate biosynthesis; (R)-pantoate from 3-methyl-2-oxobutanoate: step 1/2. Its function is as follows. Catalyzes the reversible reaction in which hydroxymethyl group from 5,10-methylenetetrahydrofolate is transferred onto alpha-ketoisovalerate to form ketopantoate. This chain is 3-methyl-2-oxobutanoate hydroxymethyltransferase, found in Campylobacter jejuni (strain RM1221).